A 250-amino-acid chain; its full sequence is Proteasome subunit alpha (250 aa).

Belongs to the peptidase T1A family. As to quaternary structure, the 20S proteasome core is composed of 14 alpha and 14 beta subunits that assemble into four stacked heptameric rings, resulting in a barrel-shaped structure. The two inner rings, each composed of seven catalytic beta subunits, are sandwiched by two outer rings, each composed of seven alpha subunits. The catalytic chamber with the active sites is on the inside of the barrel. Has a gated structure, the ends of the cylinder being occluded by the N-termini of the alpha-subunits. Is capped at one or both ends by the proteasome regulatory ATPase, PAN.

The protein resides in the cytoplasm. With respect to regulation, the formation of the proteasomal ATPase PAN-20S proteasome complex, via the docking of the C-termini of PAN into the intersubunit pockets in the alpha-rings, triggers opening of the gate for substrate entry. Interconversion between the open-gate and close-gate conformations leads to a dynamic regulation of the 20S proteasome proteolysis activity. Functionally, component of the proteasome core, a large protease complex with broad specificity involved in protein degradation. This chain is Proteasome subunit alpha, found in Methanobrevibacter smithii (strain ATCC 35061 / DSM 861 / OCM 144 / PS).